We begin with the raw amino-acid sequence, 602 residues long: Elongation factor 4 (602 aa).

In terms of domain architecture, tr-type G spans 7–188 (ENIRNFSIIA…AIIELIPPPK (182 aa)). GTP is bound by residues 19–24 (DHGKST) and 135–138 (NKID).

This sequence belongs to the TRAFAC class translation factor GTPase superfamily. Classic translation factor GTPase family. LepA subfamily.

The protein resides in the cell inner membrane. The enzyme catalyses GTP + H2O = GDP + phosphate + H(+). Its function is as follows. Required for accurate and efficient protein synthesis under certain stress conditions. May act as a fidelity factor of the translation reaction, by catalyzing a one-codon backward translocation of tRNAs on improperly translocated ribosomes. Back-translocation proceeds from a post-translocation (POST) complex to a pre-translocation (PRE) complex, thus giving elongation factor G a second chance to translocate the tRNAs correctly. Binds to ribosomes in a GTP-dependent manner. The polypeptide is Elongation factor 4 (Chlamydia caviae (strain ATCC VR-813 / DSM 19441 / 03DC25 / GPIC) (Chlamydophila caviae)).